Reading from the N-terminus, the 194-residue chain is NADH-ubiquinone oxidoreductase subunit NUO2 (194 aa).

Its function is as follows. Fungal-specific subunit of the mitochondrial membrane respiratory chain NADH dehydrogenase (Complex I). Complex I functions in the transfer of electrons from NADH to the respiratory chain. The immediate electron acceptor for the enzyme is believed to be ubiquinone. Plays a role in cell wall integrity and is involved in osmotic and oxidative resistance, yeast to hypha transition, and virulence via providing the ability to damage and invade host cells such as oral epithelial cells. This chain is NADH-ubiquinone oxidoreductase subunit NUO2, found in Candida albicans (strain SC5314 / ATCC MYA-2876) (Yeast).